The primary structure comprises 79 residues: Raniseptin-3 (79 aa).

The N-terminal stretch at 1–22 is a signal peptide; sequence MAFLKKSLFLVLFLGIVSLSIC. A propeptide spanning residues 23–49 is cleaved from the precursor; that stretch reads EEEKREGEEEEKQEEENEELSEEELRE.

It belongs to the frog skin active peptide (FSAP) family. Dermaseptin subfamily. Expressed by the skin glands.

It localises to the secreted. Its function is as follows. Has antibacterial activity. This chain is Raniseptin-3, found in Boana raniceps (Chaco tree frog).